The sequence spans 211 residues: MKWGINMLNREIINALLDIKAVELRVDKENWFTWASGIKSPIYCDNRLTMSYPKIRKQIAEGFVKKINELYPNVDYIVGTATAGIPHAAWISDIMDLPMLYVRGSAKDHGKTNQIEGKFEKGKKVVVIEDLISTGKSSVLAAQALQEEGLEVLGVIAIFSYNLNKAKEKFDEAKIPFSTLTNYDVLLELAKETGLIGDKENQILIDWRNNL.

5-phospho-alpha-D-ribose 1-diphosphate contacts are provided by residues R103, K107, H109, and E129–S137. S133 provides a ligand contact to orotate.

Belongs to the purine/pyrimidine phosphoribosyltransferase family. PyrE subfamily. Homodimer. The cofactor is Mg(2+).

It carries out the reaction orotidine 5'-phosphate + diphosphate = orotate + 5-phospho-alpha-D-ribose 1-diphosphate. It participates in pyrimidine metabolism; UMP biosynthesis via de novo pathway; UMP from orotate: step 1/2. In terms of biological role, catalyzes the transfer of a ribosyl phosphate group from 5-phosphoribose 1-diphosphate to orotate, leading to the formation of orotidine monophosphate (OMP). This chain is Orotate phosphoribosyltransferase, found in Fusobacterium nucleatum subsp. nucleatum (strain ATCC 25586 / DSM 15643 / BCRC 10681 / CIP 101130 / JCM 8532 / KCTC 2640 / LMG 13131 / VPI 4355).